We begin with the raw amino-acid sequence, 3298 residues long: Protocadherin-16 (3298 aa).

Residues 1 to 42 (MQKELGIVPSCPGMKSPRPHLLLPLLLLLLLLLGAGVPGAWG) form the signal peptide. Cadherin domains follow at residues 43–143 (QAGS…APAF), 144–255 (PQAR…APAF), 256–362 (NQSR…QPSM), 367–472 (LSAD…APAF), 474–578 (RQLY…EPQF), 579–685 (QRTF…PPQF), 686–790 (YPRE…PPIF), 791–894 (EQLQ…SPAF), 895–1000 (PAPE…APRF), 1001–1111 (NSPT…DPTF), 1112–1211 (LAVA…SPTF), 1218–1324 (AGGG…PPDL), 1333–1436 (VPVV…APAF), 1437–1546 (ARDP…APVF), 1547–1649 (ASPS…APTF), 1650–1751 (QQQE…APTF), 1752–1855 (GSAH…APAF), 1856–1960 (PVPA…APTF), 1965–2068 (LRLR…GPRF), 2069–2171 (PRAS…APRF), 2172–2277 (LRPH…RPTI), 2278–2376 (PQPW…APAF), 2377–2482 (SQSL…APSF), 2483–2602 (TLSH…PPVF), 2603–2706 (TRAS…GPAF), 2707–2813 (PLNL…DPVF), and 2814–2933 (LAPA…APDL). The Extracellular portion of the chain corresponds to 43-2940 (QAGSLDLQID…PDLNLLLVGA (2898 aa)). Asn-217, Asn-256, and Asn-402 each carry an N-linked (GlcNAc...) asparagine glycan. Asn-584 carries N-linked (GlcNAc...) asparagine glycosylation. N-linked (GlcNAc...) asparagine glycosylation is present at Asn-1249. Residue Asn-1521 is glycosylated (N-linked (GlcNAc...) asparagine). N-linked (GlcNAc...) asparagine glycosylation is present at Asn-1718. Residue Asn-1996 is glycosylated (N-linked (GlcNAc...) asparagine). Residues 2065–2094 (GPRFPRASSEATIRENAPPGTPIVSPRAVH) form a disordered region. N-linked (GlcNAc...) asparagine glycans are attached at residues Asn-2361, Asn-2428, and Asn-2569. Asn-2761, Asn-2792, and Asn-2862 each carry an N-linked (GlcNAc...) asparagine glycan. The helical transmembrane segment at 2941–2961 (VAASLGVVVVLALAALVLGLV) threads the bilayer. The Cytoplasmic portion of the chain corresponds to 2962-3298 (RARSRKAEAA…EPPDDTELHI (337 aa)). A disordered region spans residues 2986–3040 (LQKLGREPPSPPPSEHLYHQTLPSYGGPGAGGPYPRGGSLDPSHSSGRGSAEAAE). A compositionally biased stretch (gly residues) spans 3011–3020 (GGPGAGGPYP). Ser-3055 is subject to Phosphoserine. Disordered stretches follow at residues 3062–3082 (ARGPDSGIQQDADGLSDTSCE) and 3233–3298 (ASHR…ELHI). 2 stretches are compositionally biased toward low complexity: residues 3244–3266 (SLSSAAMSPSFSPSLSPLAARSP) and 3276–3289 (GPSASALSAESGLE).

In terms of assembly, heterophilic interaction with FAT4; this interaction affects their respective protein levels. In terms of tissue distribution, expressed in fibroblasts but not in melanocytes or keratinocytes.

It localises to the cell membrane. Its function is as follows. Calcium-dependent cell-adhesion protein. Mediates functions in neuroprogenitor cell proliferation and differentiation. In the heart, has a critical role for proper morphogenesis of the mitral valve, acting in the regulation of cell migration involved in valve formation. The polypeptide is Protocadherin-16 (DCHS1) (Homo sapiens (Human)).